The sequence spans 583 residues: Nuclear hormone receptor family member nhr-31 (583 aa).

The interval 43 to 77 is disordered; sequence DLRTSGATSSSGPATSYIIRPSDKQPTVSSGGSQN. A compositionally biased stretch (low complexity) spans 46-58; it reads TSGATSSSGPATS. Over residues 66 to 77 the composition is skewed to polar residues; the sequence is KQPTVSSGGSQN. The nuclear receptor DNA-binding region spans 79-154; that stretch reads DSVCAVCGDG…AGMDPKAVRP (76 aa). NR C4-type zinc fingers lie at residues 82–102 and 118–142; these read CAVCGDGIAKLHYGVLACYGC and CRFSNNCIVDKFQRNSCRYCRFQRC. Residues 195 to 464 form the NR LBD domain; that stretch reads ETRILLMQLM…DNLLAEMFGD (270 aa).

The protein belongs to the nuclear hormone receptor family.

It is found in the nucleus. Its function is as follows. Orphan nuclear receptor. The sequence is that of Nuclear hormone receptor family member nhr-31 (nhr-31) from Caenorhabditis elegans.